A 346-amino-acid polypeptide reads, in one-letter code: Ribosomal RNA small subunit methyltransferase H (346 aa).

S-adenosyl-L-methionine-binding positions include 53-55, Asp-70, Phe-97, Asp-114, and Gln-121; that span reads GGY.

The protein belongs to the methyltransferase superfamily. RsmH family.

Its subcellular location is the cytoplasm. The catalysed reaction is cytidine(1402) in 16S rRNA + S-adenosyl-L-methionine = N(4)-methylcytidine(1402) in 16S rRNA + S-adenosyl-L-homocysteine + H(+). Specifically methylates the N4 position of cytidine in position 1402 (C1402) of 16S rRNA. In Bartonella henselae (strain ATCC 49882 / DSM 28221 / CCUG 30454 / Houston 1) (Rochalimaea henselae), this protein is Ribosomal RNA small subunit methyltransferase H.